Reading from the N-terminus, the 124-residue chain is Small ribosomal subunit protein uS12 (124 aa).

A disordered region spans residues 1–28; sequence MPTISQLIGSERKRLTRKTKSPALKSCP. A 3-methylthioaspartic acid modification is found at D89. The segment at 104-124 is disordered; the sequence is TAGVKDRRQSRSKYGAKAPKD.

Belongs to the universal ribosomal protein uS12 family. In terms of assembly, part of the 30S ribosomal subunit. Contacts proteins S8 and S17. May interact with IF1 in the 30S initiation complex.

In terms of biological role, with S4 and S5 plays an important role in translational accuracy. Functionally, interacts with and stabilizes bases of the 16S rRNA that are involved in tRNA selection in the A site and with the mRNA backbone. Located at the interface of the 30S and 50S subunits, it traverses the body of the 30S subunit contacting proteins on the other side and probably holding the rRNA structure together. The combined cluster of proteins S8, S12 and S17 appears to hold together the shoulder and platform of the 30S subunit. This Prochlorococcus marinus (strain MIT 9312) protein is Small ribosomal subunit protein uS12.